Here is a 348-residue protein sequence, read N- to C-terminus: Spore wall and anchoring disk complex protein EnP1 (348 aa).

The N-terminal stretch at 1–16 (MKLLGLLISAFGAINA) is a signal peptide. N47, N139, and N140 each carry an N-linked (GlcNAc...) asparagine glycan. Residues 193–198 (PRHGRS) carry the HBM1 motif. Residues 248 to 256 (IRKGKDKKC) carry the HBM2 motif. Residues 322–327 (LKKIRG) carry the HBM3 motif.

The protein localises to the spore wall. The protein resides in the spore. It localises to the perispore. Functionally, spore wall protein involved in the adhesion to host cells surface glycoaminoglycans (GAGs). Microsporidian spore adherence is an integral part of activation and host cell infection. The protein is Spore wall and anchoring disk complex protein EnP1 (EnP1) of Encephalitozoon intestinalis (Microsporidian parasite).